Here is a 539-residue protein sequence, read N- to C-terminus: Carotene epsilon-monooxygenase, chloroplastic (539 aa).

A chloroplast-targeting transit peptide spans 1–36 (MESSLFSPSSSSYSSLFTAKPTRLLSPKPKFTFSIR). C487 provides a ligand contact to heme.

The protein belongs to the cytochrome P450 family. Heme serves as cofactor.

It is found in the plastid. The protein resides in the chloroplast. It carries out the reaction alpha-carotene + reduced [NADPH--hemoprotein reductase] + O2 = alpha-cryptoxanthin + oxidized [NADPH--hemoprotein reductase] + H2O + H(+). It catalyses the reaction zeinoxanthin + reduced [NADPH--hemoprotein reductase] + O2 = lutein + oxidized [NADPH--hemoprotein reductase] + H2O + H(+). Functionally, heme-containing cytochrome P450 involved in the biosynthesis of xanthophylls. Specific for epsilon- and beta-ring hydroxylation of alpha-carotene. Has only a low activity toward the beta-rings of beta-carotene. The preferred substrate in planta is not alpha-carotene but the epsilon-ring of zeinoxanthin. Possesses a major beta-carotene hydroxylase activity in planta when depleted in its preferred substrate alpha-carotene. The protein is Carotene epsilon-monooxygenase, chloroplastic (CYP97C1) of Arabidopsis thaliana (Mouse-ear cress).